Here is an 81-residue protein sequence, read N- to C-terminus: Putative membrane protein insertion efficiency factor (81 aa).

This sequence belongs to the UPF0161 family.

The protein resides in the cell inner membrane. In terms of biological role, could be involved in insertion of integral membrane proteins into the membrane. This Pseudomonas syringae pv. tomato (strain ATCC BAA-871 / DC3000) protein is Putative membrane protein insertion efficiency factor.